A 284-amino-acid polypeptide reads, in one-letter code: Ribose-phosphate pyrophosphokinase 1 (284 aa).

An ATP-binding site is contributed by 34–36; sequence DGE. Mg(2+) is bound by residues His126 and Asp163. The active site involves Lys186. D-ribose 5-phosphate is bound by residues Arg188, Asp211, and 215–219; that span reads STGGT.

Belongs to the ribose-phosphate pyrophosphokinase family. Class III (archaeal) subfamily. Mg(2+) serves as cofactor.

The protein localises to the cytoplasm. The catalysed reaction is D-ribose 5-phosphate + ATP = 5-phospho-alpha-D-ribose 1-diphosphate + AMP + H(+). Its pathway is metabolic intermediate biosynthesis; 5-phospho-alpha-D-ribose 1-diphosphate biosynthesis; 5-phospho-alpha-D-ribose 1-diphosphate from D-ribose 5-phosphate (route I): step 1/1. Involved in the biosynthesis of the central metabolite phospho-alpha-D-ribosyl-1-pyrophosphate (PRPP) via the transfer of pyrophosphoryl group from ATP to 1-hydroxyl of ribose-5-phosphate (Rib-5-P). The protein is Ribose-phosphate pyrophosphokinase 1 of Archaeoglobus fulgidus (strain ATCC 49558 / DSM 4304 / JCM 9628 / NBRC 100126 / VC-16).